We begin with the raw amino-acid sequence, 592 residues long: Aspartate--tRNA(Asp/Asn) ligase (592 aa).

Glu-176 is a binding site for L-aspartate. The interval 200 to 203 (QLYK) is aspartate. Arg-222 is a binding site for L-aspartate. ATP is bound by residues 222 to 224 (RDE) and Gln-231. Residue His-452 participates in L-aspartate binding. Glu-486 contributes to the ATP binding site. Residue Arg-493 participates in L-aspartate binding. 538–541 (GVDR) contacts ATP.

Belongs to the class-II aminoacyl-tRNA synthetase family. Type 1 subfamily. As to quaternary structure, homodimer.

It is found in the cytoplasm. The enzyme catalyses tRNA(Asx) + L-aspartate + ATP = L-aspartyl-tRNA(Asx) + AMP + diphosphate. Its function is as follows. Aspartyl-tRNA synthetase with relaxed tRNA specificity since it is able to aspartylate not only its cognate tRNA(Asp) but also tRNA(Asn). Reaction proceeds in two steps: L-aspartate is first activated by ATP to form Asp-AMP and then transferred to the acceptor end of tRNA(Asp/Asn). This Rhodopirellula baltica (strain DSM 10527 / NCIMB 13988 / SH1) protein is Aspartate--tRNA(Asp/Asn) ligase.